Here is an 88-residue protein sequence, read N- to C-terminus: MKAIITVVGKDRTGIVAGVSTKIAELGLNIDDITQTVLDEYFTMMAVVSSQESQDFAQLRKEFEAFGETLNVKINIQSSAIFDAMHNL.

The 74-residue stretch at I4–Q77 folds into the ACT domain.

The protein belongs to the UPF0237 family. Homodimer.

This chain is UPF0237 protein SMU_72, found in Streptococcus mutans serotype c (strain ATCC 700610 / UA159).